The following is a 44-amino-acid chain: Homeobox protein DLX-1 (44 aa).

Residues 19–44 (RALSAGSPPVPPGWNRIPPLGRAQEE) form a disordered region.

It belongs to the distal-less homeobox family. As to quaternary structure, interacts with SMAD4 (via homeobox DNA-binding domain). Interacts (via homeobox DNA-binding domain) with POU4F2; this interaction suppresses DLX1-mediated transcriptional activity in postnatal retina and enhances retinal ganglion cell (RGC) differentiation.

It is found in the nucleus. In terms of biological role, plays a role as a transcriptional activator or repressor. Inhibits several cytokine signaling pathways, such as TGFB1, activin-A/INHBA and BMP4 by interfering with the transcriptional stimulatory activity of transcription factors, such as MSX2, FAST2, SMAD2 and SMAD3 during hematopoietic cell differentiation. Plays a role in terminal differentiation of interneurons, such as amacrine and bipolar cells in the developing retina. Likely to play a regulatory role in the development of the ventral forebrain. May play a role in craniofacial patterning and morphogenesis and may be involved in the early development of diencephalic subdivisions. In Rattus norvegicus (Rat), this protein is Homeobox protein DLX-1 (Dlx1).